Reading from the N-terminus, the 501-residue chain is Ell-associated factor Eaf (501 aa).

2 stretches are compositionally biased toward polar residues: residues 138–149 and 173–192; these read NMGQGQLHSQGA and ENST…SRRN. 2 disordered regions span residues 138–226 and 256–501; these read NMGQ…PAWD and GHAN…DDDD. Composition is skewed to low complexity over residues 200–221 and 256–270; these read RNSP…SPQS and GHAN…SATG. Residue serine 202 is modified to Phosphoserine. The segment covering 271-283 has biased composition (polar residues); it reads QTDFGSISSSSHI. 2 stretches are compositionally biased toward low complexity: residues 302–314 and 329–343; these read QRQS…QQQP and QQQR…QRPP. Residues 393-408 show a composition bias toward acidic residues; the sequence is DSSDSDSGSDSDDSTE. 3 stretches are compositionally biased toward low complexity: residues 416 to 437, 455 to 471, and 483 to 501; these read QQPV…HLNQ, QQQQ…QKQQ, and NDLL…DDDD.

It belongs to the EAF family.

It is found in the nucleus. Its function is as follows. Promotes transcriptional elongation by Su(Tpl)/ELL. Essential for development. The protein is Ell-associated factor Eaf of Drosophila yakuba (Fruit fly).